Consider the following 122-residue polypeptide: Large ribosomal subunit protein uL14 (122 aa).

It belongs to the universal ribosomal protein uL14 family. In terms of assembly, part of the 50S ribosomal subunit. Forms a cluster with proteins L3 and L19. In the 70S ribosome, L14 and L19 interact and together make contacts with the 16S rRNA in bridges B5 and B8.

Its function is as follows. Binds to 23S rRNA. Forms part of two intersubunit bridges in the 70S ribosome. In Bradyrhizobium diazoefficiens (strain JCM 10833 / BCRC 13528 / IAM 13628 / NBRC 14792 / USDA 110), this protein is Large ribosomal subunit protein uL14.